Consider the following 360-residue polypeptide: 3-dehydroquinate synthase (360 aa).

NAD(+) is bound by residues 71–76 (DGEQYK), 105–109 (GVVGD), 129–130 (TT), Lys142, Lys151, and 169–172 (TLNT). Residues Glu184, His248, and His265 each contribute to the Zn(2+) site.

Belongs to the sugar phosphate cyclases superfamily. Dehydroquinate synthase family. Co(2+) serves as cofactor. It depends on Zn(2+) as a cofactor. The cofactor is NAD(+).

The protein resides in the cytoplasm. The enzyme catalyses 7-phospho-2-dehydro-3-deoxy-D-arabino-heptonate = 3-dehydroquinate + phosphate. It participates in metabolic intermediate biosynthesis; chorismate biosynthesis; chorismate from D-erythrose 4-phosphate and phosphoenolpyruvate: step 2/7. Catalyzes the conversion of 3-deoxy-D-arabino-heptulosonate 7-phosphate (DAHP) to dehydroquinate (DHQ). In Coxiella burnetii (strain CbuK_Q154) (Coxiella burnetii (strain Q154)), this protein is 3-dehydroquinate synthase.